The primary structure comprises 174 residues: Gamma-crystallin A (174 aa).

Beta/gamma crystallin 'Greek key' domains follow at residues 2–40 (GKIT…RVDS) and 41–83 (GCWM…RSIP). The tract at residues 84 to 87 (YTSS) is connecting peptide. Beta/gamma crystallin 'Greek key' domains follow at residues 88 to 128 (HRIR…HVLE) and 129 to 171 (GCWV…RRVM).

The protein belongs to the beta/gamma-crystallin family.

In terms of biological role, crystallins are the dominant structural components of the vertebrate eye lens. The chain is Gamma-crystallin A (Cryga) from Mus musculus (Mouse).